We begin with the raw amino-acid sequence, 550 residues long: O-phosphoserine--tRNA(Cys) ligase (550 aa).

The disordered stretch occupies residues 1–32 (MRFNPQDWKEKSHTNFEGAWHDGPSVITPPGE). Substrate is bound by residues 212–214 (HMT), 257–259 (SAS), 299–300 (YY), and Asn342.

Belongs to the class-II aminoacyl-tRNA synthetase family. O-phosphoseryl-tRNA(Cys) synthetase subfamily. As to quaternary structure, homotetramer. Interacts with SepCysS.

The catalysed reaction is tRNA(Cys) + O-phospho-L-serine + ATP = O-phospho-L-seryl-tRNA(Cys) + AMP + diphosphate. In terms of biological role, catalyzes the attachment of O-phosphoserine (Sep) to tRNA(Cys). This chain is O-phosphoserine--tRNA(Cys) ligase, found in Methanoregula boonei (strain DSM 21154 / JCM 14090 / 6A8).